Consider the following 268-residue polypeptide: GTP cyclohydrolase FolE2 (268 aa).

It belongs to the GTP cyclohydrolase IV family.

The enzyme catalyses GTP + H2O = 7,8-dihydroneopterin 3'-triphosphate + formate + H(+). It participates in cofactor biosynthesis; 7,8-dihydroneopterin triphosphate biosynthesis; 7,8-dihydroneopterin triphosphate from GTP: step 1/1. Converts GTP to 7,8-dihydroneopterin triphosphate. The sequence is that of GTP cyclohydrolase FolE2 from Paraburkholderia xenovorans (strain LB400).